The sequence spans 352 residues: DNA-directed RNA polymerase subunit alpha (352 aa).

The tract at residues Met-1–Asn-226 is alpha N-terminal domain (alpha-NTD). The tract at residues His-243 to Leu-352 is alpha C-terminal domain (alpha-CTD). The interval Asp-324 to Leu-352 is disordered. Polar residues predominate over residues Ser-326–Asp-338. Over residues Asp-340–Leu-352 the composition is skewed to acidic residues.

This sequence belongs to the RNA polymerase alpha chain family. In terms of assembly, homodimer. The RNAP catalytic core consists of 2 alpha, 1 beta, 1 beta' and 1 omega subunit. When a sigma factor is associated with the core the holoenzyme is formed, which can initiate transcription.

It carries out the reaction RNA(n) + a ribonucleoside 5'-triphosphate = RNA(n+1) + diphosphate. Functionally, DNA-dependent RNA polymerase catalyzes the transcription of DNA into RNA using the four ribonucleoside triphosphates as substrates. This chain is DNA-directed RNA polymerase subunit alpha, found in Nocardia farcinica (strain IFM 10152).